The primary structure comprises 178 residues: Cell division protein SepF (178 aa).

Residues 19-45 (EHYESEHHTPHKDEDDSMEHDREERRA) are compositionally biased toward basic and acidic residues. Residues 19 to 65 (EHYESEHHTPHKDEDDSMEHDREERRAPAPVREIARETPTPHAAEEE) form a disordered region.

The protein belongs to the SepF family. As to quaternary structure, homodimer. Interacts with FtsZ.

The protein resides in the cytoplasm. Cell division protein that is part of the divisome complex and is recruited early to the Z-ring. Probably stimulates Z-ring formation, perhaps through the cross-linking of FtsZ protofilaments. Its function overlaps with FtsA. This is Cell division protein SepF from Arthrobacter sp. (strain FB24).